Here is a 1921-residue protein sequence, read N- to C-terminus: MKSPALQSLSMAGLQLMTPASSPMGPFFGLPWQQEAIHDNIYTPRKYQVELLEAALDHNTIVCLNTGSGKTFIAVLLTKELSYQIRGDFNKNGKRTVFLVNSANQVAQQVSAVRTHSDLKVGEYSSLEVTESWTKEKWSQEFSKHQVLVMTCHVALTVLRNEYLSLSNINLLVFDECHLAIQDHPYREIMKICEDYPSCPRILGLTASILNGKCDPAELEEKIKKLEKILKSNAETATDLVVLDRYTSQPCEIVVDCGPYTDKSGLYGRLLRELDEALHFLNDCNISVHSKERDSTLISKQILSDCRAVLVVLGPWCADKVAGMMVRELQKYIKHEQEELHRKFLLFTDTFLRKIHALCEEHFSPASLDLKFVTPKVIKLLEILRKYKPYERQQFESVEWYNNRNQDNYVSWSDSEDDDEDEEIEEKEKPETNFPSPFTNILCGIIFVERRYTAVVLNRLIKEAGKQDPELAYISSNFITGHGIGKNQPRNKQMEVEFRKQEEVLRKFRAHETNLLIATSIVEEGVDIPKCNLVVRFDLPTEYRSYVQSKGRARAPISNYIMLADTDKIKSFEEDLKTYKAIEKILRNKCSKSVDTSETETEPIVDDDDVFPPYVLRTDENSPRVTINTAIGHINRYCARLPSDPFTHLAPKCKTRELPDHTFYSTLYLPINSPLRASIVGPPMSCARLAERVVALICCEKLHKIGELDDHLMPVGKETVKYEEELDLHDEEETSVPGRPGSTKRRQCYPKAIPECLRDSYPKPDQPCYLYVIGMVLTTPLPDELNFRRRKLYPPEDTTRCFGILTAKPIPQIPHFPVYTRSGEVTISIELKKSGFTLSLQMLELITRLHQYIFSHILRLEKPALEFKPTEADSAYCVLPLNIVDDSSTLDIDFKFMEDIEKSEARTGIPSTQYTKEMPFIFKLEDYQDAVIIPRYRNFDQPHRFYVADVYTDLTPLSKFPSPEYETFAEYYKTKYNLDLTNLNQPLLDVDHTSSRLNLLTPRHLNQKGKALPLSSAEKRKAKWESLQNKQILVPELCAIHPIPASLWRKAVCLPSILYRLHCLLTAEELRAQTATDAGVGVKSLPADFRYPNLDFGWKKSIDSKSFISIPSSSLVENENYCKHSTIVVPENAAHQGANRTSSAEKHDQMSVSYRTLLDESPSKLQIDVSAELAAINGVSYNKNLANGNCDLVNRDFCQGNQLNYCRQEIPVQPTTSYPIQNLYSSENQPKPSNECTLLSNKYLDGNANRSTSDGCPKMTVTTSTSTALNLSKDKVDSEKNTSSGYSSKTLGPNPGLILQALTLSNASDGFNLERLEMLGDSFLKHAITTYLFCTYPDAHEGRLSYMRSKKVSNCNLYRLGKKKGLPSRMVVSIFDPPVNWLPPGYIVNQDKSNTDKWEKEETTKENLLANGKLDYDDDDEEDEDLMWRLPKEETDFEDDFLEYDQEHIKFIDSMLMGSGAFVKKISLSHFSTTDSNYEWKAPKKSSLGNVPFSSDFDDFDYSSWDAMCYLDPSKAVEEDDFVVGFWNPSEENCGVDAGKQSISYDLHTEQCIADKSIADCVEALLGCYLTSCGERAAQLFLCSLGLKVLPVIKKTDWESTLCATGENCNSEQKNLSPNSVSACIVNSEPSLYKDLEYGCLKIPPRCMFDHPDAEKTLNHLISGFENFEKKINYSFKNKAYLLQAFTHASYHYNTITDCYQRLEFLGDAILDYLITKHLYEDPRQHSPGVLTDLRSALVNNTIFASLAVKYDYHKYFKAVSPELFHVIDDFVQFQMEKNEMQGMDSELRRSEEDEEKEEDIEVPKAMGDIFESLAGAIYMDSGMSLEMVWQVYYPMMRPLIEKFSANVPRSPVRELLEMEPETAKFSPAERTYDGKVRVTVEVVGKGKFKGVGRSYRIAKSAAARRALRSLKANQPQVPNS.

The Helicase ATP-binding domain occupies leucine 51–glutamate 227. Residue leucine 64 to threonine 71 participates in ATP binding. The DECH box signature appears at aspartate 175–histidine 178. The tract at residues tyrosine 409–asparagine 433 is disordered. Positions aspartate 414–glutamate 425 are enriched in acidic residues. The region spanning asparagine 433 to glutamate 602 is the Helicase C-terminal domain. The Dicer dsRNA-binding fold domain maps to alanine 630–tyrosine 722. A disordered region spans residues aspartate 727–arginine 746. The PAZ domain occupies lysine 895–proline 1042. The interval asparagine 1270 to lysine 1289 is disordered. 2 RNase III domains span residues aspartate 1277 to threonine 1404 and phenylalanine 1665 to glycine 1823. 4 residues coordinate Mg(2+): glutamate 1317, aspartate 1396, glutamate 1399, and glutamate 1704. Residues glutamine 1782–isoleucine 1801 are disordered. Mg(2+) contacts are provided by aspartate 1809 and glutamate 1812. In terms of domain architecture, DRBM spans valine 1848 to alanine 1913.

This sequence belongs to the helicase family. Dicer subfamily. As to quaternary structure, component of the RISC loading complex (RLC), or micro-RNA (miRNA) loading complex (miRLC), which is composed of DICER1, AGO2 and TARBP2; DICER1 and TARBP2 are required to process precursor miRNAs (pre-miRNAs) to mature miRNAs and then load them onto AGO2. Note that the trimeric RLC/miRLC is also referred to as RISC. Mg(2+) is required as a cofactor. Mn(2+) serves as cofactor.

It is found in the cytoplasm. The catalysed reaction is Endonucleolytic cleavage to 5'-phosphomonoester.. In terms of biological role, double-stranded RNA (dsRNA) endoribonuclease playing a central role in short dsRNA-mediated post-transcriptional gene silencing. Cleaves naturally occurring long dsRNAs and short hairpin pre-microRNAs (miRNA) into fragments of twenty-one to twenty-three nucleotides with 3' overhang of two nucleotides, producing respectively short interfering RNAs (siRNA) and mature microRNAs. SiRNAs and miRNAs serve as guide to direct the RNA-induced silencing complex (RISC) to complementary RNAs to degrade them or prevent their translation. Gene silencing mediated by siRNAs, also called RNA interference, controls the elimination of transcripts from mobile and repetitive DNA elements of the genome but also the degradation of exogenous RNA of viral origin for instance. The miRNA pathway on the other side is a mean to specifically regulate the expression of target genes. This chain is Endoribonuclease Dicer (DICER1), found in Gallus gallus (Chicken).